Consider the following 740-residue polypeptide: NAD(P)H-quinone oxidoreductase subunit 5, chloroplastic (740 aa).

Transmembrane regions (helical) follow at residues 9-29 (WIIPFIPLPVPMLIGAGLILF), 40-60 (WAFQSVLLLSIVMIFSIYLSI), 89-109 (IDPLTSIMSILITTVGIMVLI), 125-145 (FAYMSFFSTSMLGLVTSSNLI), 147-167 (IYIFWELVGLCSYLLIGFWFT), 185-205 (GDFGLLLGILGFYWITGSFEF), 219-239 (NEVNFLFVTLCAVLLFAGAVA), 258-278 (TPISALIHAATMVAAGIFLVA), 286-306 (VIPYIMYLISVIGIITVLLGA), 327-347 (LGYMMLALGMGSYRSALFHLI), 354-374 (ALLFLGSGSIIHSMETIVGYS), 396-416 (ITFLLGTLSLCGIPPLACFWS), 425-445 (WLYSPIFAIIAWATAGLTAFY), 543-563 (LFPIFVLGLFTLFVGSIGIPF), 602-622 (VLSVSIAYFGIFLASFLYKPI), and 718-738 (YLFLYLAYVSVFLLVYYLFFL).

This sequence belongs to the complex I subunit 5 family. In terms of assembly, NDH is composed of at least 16 different subunits, 5 of which are encoded in the nucleus.

It localises to the plastid. It is found in the chloroplast thylakoid membrane. It catalyses the reaction a plastoquinone + NADH + (n+1) H(+)(in) = a plastoquinol + NAD(+) + n H(+)(out). The enzyme catalyses a plastoquinone + NADPH + (n+1) H(+)(in) = a plastoquinol + NADP(+) + n H(+)(out). In terms of biological role, NDH shuttles electrons from NAD(P)H:plastoquinone, via FMN and iron-sulfur (Fe-S) centers, to quinones in the photosynthetic chain and possibly in a chloroplast respiratory chain. The immediate electron acceptor for the enzyme in this species is believed to be plastoquinone. Couples the redox reaction to proton translocation, and thus conserves the redox energy in a proton gradient. The polypeptide is NAD(P)H-quinone oxidoreductase subunit 5, chloroplastic (ndhF) (Atropa belladonna (Belladonna)).